The chain runs to 120 residues: UPF0231 protein YacL (120 aa).

Belongs to the UPF0231 family.

This is UPF0231 protein YacL from Salmonella paratyphi A (strain ATCC 9150 / SARB42).